Here is a 305-residue protein sequence, read N- to C-terminus: Phosphoinositol dihydroceramide synthase (305 aa).

An N-terminal signal peptide occupies residues 1-23 (MPSKKETLTVIVIMALFLLLTAA). Cysteine 24 carries N-palmitoyl cysteine lipidation. Cysteine 24 carries the S-diacylglycerol cysteine lipid modification. A run of 6 helical transmembrane segments spans residues 41-61 (LFFA…FAIF), 117-137 (VFAG…GLCL), 149-169 (FALV…IHPA), 216-236 (FAAV…YAII), 241-261 (WYVI…AIYS), and 266-286 (IIDV…FEYG).

It is found in the membrane. The enzyme catalyses N-(2-hydroxy-fatty acyl)-dihydroceramide + a 1,2-diacyl-sn-glycero-3-phospho-(1D-myo-inositol) = inositol-1-phospho-N-(2-hydroxy-fatty acyl)-dihydroceramide + a 1,2-diacyl-sn-glycerol. Its function is as follows. Catalyzes the addition of a phosphorylinositol group onto dihydroceramide to form phosphoinositol dihydroceramide (PI-DHC), an essential step in sphingolipid biosynthesis. The sequence is that of Phosphoinositol dihydroceramide synthase from Bacteroides thetaiotaomicron (strain ATCC 29148 / DSM 2079 / JCM 5827 / CCUG 10774 / NCTC 10582 / VPI-5482 / E50).